A 338-amino-acid polypeptide reads, in one-letter code: Ketol-acid reductoisomerase (NADP(+)) (338 aa).

The 181-residue stretch at 1–181 (MNVFYDKDAD…GGGRAGIIET (181 aa)) folds into the KARI N-terminal Rossmann domain. NADP(+) contacts are provided by residues 24-27 (YGSQ), R47, and S52. H107 is a catalytic residue. Position 133 (G133) interacts with NADP(+). The KARI C-terminal knotted domain maps to 182–327 (NFREETETDL…AKLRAMMPWI (146 aa)). Residues D190, E194, E226, and E230 each contribute to the Mg(2+) site. Residue S251 coordinates substrate.

This sequence belongs to the ketol-acid reductoisomerase family. Mg(2+) serves as cofactor.

It catalyses the reaction (2R)-2,3-dihydroxy-3-methylbutanoate + NADP(+) = (2S)-2-acetolactate + NADPH + H(+). The catalysed reaction is (2R,3R)-2,3-dihydroxy-3-methylpentanoate + NADP(+) = (S)-2-ethyl-2-hydroxy-3-oxobutanoate + NADPH + H(+). It functions in the pathway amino-acid biosynthesis; L-isoleucine biosynthesis; L-isoleucine from 2-oxobutanoate: step 2/4. It participates in amino-acid biosynthesis; L-valine biosynthesis; L-valine from pyruvate: step 2/4. Involved in the biosynthesis of branched-chain amino acids (BCAA). Catalyzes an alkyl-migration followed by a ketol-acid reduction of (S)-2-acetolactate (S2AL) to yield (R)-2,3-dihydroxy-isovalerate. In the isomerase reaction, S2AL is rearranged via a Mg-dependent methyl migration to produce 3-hydroxy-3-methyl-2-ketobutyrate (HMKB). In the reductase reaction, this 2-ketoacid undergoes a metal-dependent reduction by NADPH to yield (R)-2,3-dihydroxy-isovalerate. This is Ketol-acid reductoisomerase (NADP(+)) from Burkholderia ambifaria (strain MC40-6).